A 513-amino-acid chain; its full sequence is 2-isopropylmalate synthase (513 aa).

Residues 4-268 (IKIFDTTLRD…ETGIKTELIY (265 aa)) form the Pyruvate carboxyltransferase domain. Positions 13, 203, 205, and 239 each coordinate Mn(2+). The tract at residues 392–513 (KLVHFHVHTG…GLLRKNGGAE (122 aa)) is regulatory domain.

It belongs to the alpha-IPM synthase/homocitrate synthase family. LeuA type 1 subfamily. Homodimer. The cofactor is Mn(2+).

Its subcellular location is the cytoplasm. The enzyme catalyses 3-methyl-2-oxobutanoate + acetyl-CoA + H2O = (2S)-2-isopropylmalate + CoA + H(+). The protein operates within amino-acid biosynthesis; L-leucine biosynthesis; L-leucine from 3-methyl-2-oxobutanoate: step 1/4. Catalyzes the condensation of the acetyl group of acetyl-CoA with 3-methyl-2-oxobutanoate (2-ketoisovalerate) to form 3-carboxy-3-hydroxy-4-methylpentanoate (2-isopropylmalate). This chain is 2-isopropylmalate synthase, found in Thermotoga petrophila (strain ATCC BAA-488 / DSM 13995 / JCM 10881 / RKU-1).